Here is a 418-residue protein sequence, read N- to C-terminus: 3-isopropylmalate dehydratase large subunit 1 (418 aa).

Cys298, Cys358, and Cys361 together coordinate [4Fe-4S] cluster.

Belongs to the aconitase/IPM isomerase family. LeuC type 2 subfamily. Heterodimer of LeuC and LeuD. It depends on [4Fe-4S] cluster as a cofactor.

The catalysed reaction is (2R,3S)-3-isopropylmalate = (2S)-2-isopropylmalate. It functions in the pathway amino-acid biosynthesis; L-leucine biosynthesis; L-leucine from 3-methyl-2-oxobutanoate: step 2/4. Catalyzes the isomerization between 2-isopropylmalate and 3-isopropylmalate, via the formation of 2-isopropylmaleate. The polypeptide is 3-isopropylmalate dehydratase large subunit 1 (Methanopyrus kandleri (strain AV19 / DSM 6324 / JCM 9639 / NBRC 100938)).